A 482-amino-acid polypeptide reads, in one-letter code: Isoxanthopterin deaminase (482 aa).

His74 and His76 together coordinate Zn(2+). Gln79 provides a ligand contact to substrate. Residue His246 participates in Zn(2+) binding. The substrate site is built by Glu249 and His283. Residues His283 and Asp334 each coordinate Zn(2+).

This sequence belongs to the metallo-dependent hydrolases superfamily. ATZ/TRZ family. It depends on Zn(2+) as a cofactor.

It catalyses the reaction a 2-amino-4-hydroxypteridine + H2O + H(+) = a 2,4-dihydroxypteridine + NH4(+). This Unknown prokaryotic organism protein is Isoxanthopterin deaminase.